Here is a 402-residue protein sequence, read N- to C-terminus: 1-deoxy-D-xylulose 5-phosphate reductoisomerase (402 aa).

Residues Thr-27, Gly-28, Ser-29, Ile-30, Gly-53, Lys-54, Asn-55, and Asn-140 each coordinate NADPH. Lys-141 contacts 1-deoxy-D-xylulose 5-phosphate. Residue Glu-142 participates in NADPH binding. Asp-166 is a binding site for Mn(2+). 1-deoxy-D-xylulose 5-phosphate is bound by residues Ser-167, Glu-168, Ser-192, and His-215. Glu-168 contributes to the Mn(2+) binding site. Position 221 (Gly-221) interacts with NADPH. 4 residues coordinate 1-deoxy-D-xylulose 5-phosphate: Ser-228, Asn-233, Lys-234, and Glu-237. Glu-237 is a binding site for Mn(2+).

This sequence belongs to the DXR family. It depends on Mg(2+) as a cofactor. Mn(2+) is required as a cofactor.

It carries out the reaction 2-C-methyl-D-erythritol 4-phosphate + NADP(+) = 1-deoxy-D-xylulose 5-phosphate + NADPH + H(+). The protein operates within isoprenoid biosynthesis; isopentenyl diphosphate biosynthesis via DXP pathway; isopentenyl diphosphate from 1-deoxy-D-xylulose 5-phosphate: step 1/6. In terms of biological role, catalyzes the NADPH-dependent rearrangement and reduction of 1-deoxy-D-xylulose-5-phosphate (DXP) to 2-C-methyl-D-erythritol 4-phosphate (MEP). The polypeptide is 1-deoxy-D-xylulose 5-phosphate reductoisomerase (Lawsonia intracellularis (strain PHE/MN1-00)).